Reading from the N-terminus, the 140-residue chain is Lymphocyte antigen 6L (140 aa).

Positions 1–20 (MAPLLLVLWASLVSMELTGG) are cleaved as a signal peptide. In terms of domain architecture, UPAR/Ly6 spans 31–124 (LSCFECFKVL…GSWEGFWSLP (94 aa)). Cystine bridges form between Cys-33–Cys-50 and Cys-105–Cys-110. Ser-116 is lipidated: GPI-anchor amidated serine. The propeptide at 117–140 (WEGFWSLPGRLLLPMGLGLFCTLL) is removed in mature form.

Its subcellular location is the cell membrane. In Mus musculus (Mouse), this protein is Lymphocyte antigen 6L.